Reading from the N-terminus, the 229-residue chain is Coiled-coil domain-containing protein 134 (229 aa).

The signal sequence occupies residues 1 to 22; sequence MDLLQSLAVFFVLLLPGTEVTG. A glycan (N-linked (GlcNAc...) asparagine) is linked at Asn148. The tract at residues 191 to 229 is disordered; sequence PSTDPFQKALREEEKRRKKEEKRKEIRKGPRISRSQSEL. Residues 196–218 are a coiled coil; it reads FQKALREEEKRRKKEEKRKEIRK. The short motif at 226-229 is the Prevents secretion from ER element; that stretch reads QSEL.

It belongs to the CCDC134 family. Interacts with TADA2A. Associates with the PCAF complex via TADA2A binding. In terms of processing, O-glycosylated, with additional sialic acid modifications.

The protein resides in the endoplasmic reticulum lumen. It is found in the secreted. It localises to the cytoplasm. Its subcellular location is the nucleus. Functionally, molecular adapter required to prevent protein hyperglycosylation of HSP90B1: during translation, associates with nascent HSP90B1 and the STT3A catalytic component of the OST-A complex and tethers them to a specialized translocon that forms a microenvironment for HSP90B1 folding. In the CCDC134-containing translocon, STT3A associates with the SRT pseudosubstrate motif of HSP90B1, preventing access to facultative glycosylation sites until folding is completed, preventing hyperglycosylation and subsequent degradation of HSP90B1. In extracellular secreted form, promotes proliferation and activation of CD8(+) T-cells, suggesting a cytokine-like function. May inhibit ERK and JNK signaling activity. May suppress cell migration and invasion activity, via its effects on ERK and JNK signaling. May also localize in the nucleus: enhances stability of the PCAF histone acetyltransferase (HAT) complex member TADA2A and thus promotes PCAF-mediated histone acetyltransferase activity. Has a critical role in the regulation of osteogenesis and bone development. The protein is Coiled-coil domain-containing protein 134 (Ccdc134) of Rattus norvegicus (Rat).